A 452-amino-acid chain; its full sequence is tRNA modification GTPase MnmE (452 aa).

Arg28, Glu85, and Lys124 together coordinate (6S)-5-formyl-5,6,7,8-tetrahydrofolate. In terms of domain architecture, TrmE-type G spans 220–378; the sequence is GMNVVLVGRP…LRTELLRAAG (159 aa). Asn230 serves as a coordination point for K(+). GTP-binding positions include 230-235, 249-255, 274-277, and 359-361; these read NVGKSS, TDVAGTT, DTAG, and SAR. Ser234 provides a ligand contact to Mg(2+). Residues Thr249, Val251, and Thr254 each contribute to the K(+) site. Thr255 is a binding site for Mg(2+). A (6S)-5-formyl-5,6,7,8-tetrahydrofolate-binding site is contributed by Lys452.

It belongs to the TRAFAC class TrmE-Era-EngA-EngB-Septin-like GTPase superfamily. TrmE GTPase family. Homodimer. Heterotetramer of two MnmE and two MnmG subunits. K(+) is required as a cofactor.

The protein resides in the cytoplasm. Exhibits a very high intrinsic GTPase hydrolysis rate. Involved in the addition of a carboxymethylaminomethyl (cmnm) group at the wobble position (U34) of certain tRNAs, forming tRNA-cmnm(5)s(2)U34. This Azoarcus sp. (strain BH72) protein is tRNA modification GTPase MnmE.